A 912-amino-acid polypeptide reads, in one-letter code: Protein translocase subunit SecA (912 aa).

ATP is bound by residues Q87, 105 to 109 (GEGKT), and D508. Residues 864 to 912 (AEEEVEQMQGGNAPVPVSQVTRDEPKVGRNDPCPCGSGKKYKHCHGQLS) are disordered. C896, C898, C907, and H908 together coordinate Zn(2+). Positions 902 to 912 (KKYKHCHGQLS) are enriched in basic residues.

It belongs to the SecA family. As to quaternary structure, monomer and homodimer. Part of the essential Sec protein translocation apparatus which comprises SecA, SecYEG and auxiliary proteins SecDF-YajC and YidC. The cofactor is Zn(2+).

It localises to the cell inner membrane. It is found in the cytoplasm. It carries out the reaction ATP + H2O + cellular proteinSide 1 = ADP + phosphate + cellular proteinSide 2.. Part of the Sec protein translocase complex. Interacts with the SecYEG preprotein conducting channel. Has a central role in coupling the hydrolysis of ATP to the transfer of proteins into and across the cell membrane, serving both as a receptor for the preprotein-SecB complex and as an ATP-driven molecular motor driving the stepwise translocation of polypeptide chains across the membrane. The sequence is that of Protein translocase subunit SecA from Xanthomonas euvesicatoria pv. vesicatoria (strain 85-10) (Xanthomonas campestris pv. vesicatoria).